Here is an 852-residue protein sequence, read N- to C-terminus: Glutamine--tRNA ligase (852 aa).

The interval 1-42 (MGAFGWEQDRGAPFSGRSPRILTRMTDAPRPTAGADAPARPP) is disordered. Positions 1–635 (MGAFGWEQDR…ITLKDTWGKQ (635 aa)) are glutaminyl-tRNA synthetase. The segment covering 28 to 38 (APRPTAGADAP) has biased composition (low complexity). A 'HIGH' region motif is present at residues 74-84 (PDPSGYAHLGH). The L-glutamine site is built by Asp107 and Tyr252. The short motif at 308-312 (ITSKR) is the 'KMSKS' region element. Disordered stretches follow at residues 533-562 (EGEN…TAPV) and 632-681 (WGKQ…LTPE). The segment at 636–852 (GGGTQQKAEG…LAAALKDALA (217 aa)) is gatB-like. Residues 664–675 (SSSPAKAHAPKA) show a composition bias toward low complexity.

The protein in the N-terminal section; belongs to the class-I aminoacyl-tRNA synthetase family. This sequence in the C-terminal section; belongs to the GatB/GatE family. As to quaternary structure, monomer.

It localises to the cytoplasm. It carries out the reaction tRNA(Gln) + L-glutamine + ATP = L-glutaminyl-tRNA(Gln) + AMP + diphosphate. This Deinococcus radiodurans (strain ATCC 13939 / DSM 20539 / JCM 16871 / CCUG 27074 / LMG 4051 / NBRC 15346 / NCIMB 9279 / VKM B-1422 / R1) protein is Glutamine--tRNA ligase.